We begin with the raw amino-acid sequence, 38 residues long: MQVNDLGFVASILFVLVPSVFLIILYIQTASREGKKDS.

The chain crosses the membrane as a helical span at residues 7 to 27 (GFVASILFVLVPSVFLIILYI).

The protein belongs to the PsbM family. PSII is composed of 1 copy each of membrane proteins PsbA, PsbB, PsbC, PsbD, PsbE, PsbF, PsbH, PsbI, PsbJ, PsbK, PsbL, PsbM, PsbT, PsbX, PsbY, PsbZ, Psb30/Ycf12, peripheral proteins PsbO, CyanoQ (PsbQ), PsbU, PsbV and a large number of cofactors. It forms dimeric complexes.

Its subcellular location is the cellular thylakoid membrane. One of the components of the core complex of photosystem II (PSII). PSII is a light-driven water:plastoquinone oxidoreductase that uses light energy to abstract electrons from H(2)O, generating O(2) and a proton gradient subsequently used for ATP formation. It consists of a core antenna complex that captures photons, and an electron transfer chain that converts photonic excitation into a charge separation. This subunit is found at the monomer-monomer interface. The sequence is that of Photosystem II reaction center protein M from Nostoc sp. (strain PCC 7120 / SAG 25.82 / UTEX 2576).